Here is a 1350-residue protein sequence, read N- to C-terminus: Nidogen (1350 aa).

Residues 1-22 form the signal peptide; it reads MPTFGSKLLACLLLSSVILVSG. One can recognise an NIDO domain in the interval 107-260; that stretch reads AFYSNVDTSF…GVWLFEVAPI (154 aa). Residue Asn231 is glycosylated (N-linked (GlcNAc...) asparagine). The EGF-like 1 domain occupies 281–321; it reads LALSCQAHAHQCHEKAECHDKAEGYCCVCGSGFYGNGKSCL. Intrachain disulfides connect Cys285–Cys298, Cys292–Cys307, and Cys309–Cys320. Residues 325-550 enclose the Nidogen G2 beta-barrel domain; sequence QPIRVTGTLT…GVTPESNACN (226 aa). N-linked (GlcNAc...) asparagine glycosylation is found at Asn423 and Asn480. The EGF-like 2 domain occupies 545–583; it reads ESNACNDGTADCVENSVCVPYEDTYRCDCYHGFAAQLDE. 5 disulfide bridges follow: Cys549/Cys562, Cys556/Cys571, Cys595/Cys608, Cys602/Cys617, and Cys619/Cys630. Residues 591-631 enclose the EGF-like 3; calcium-binding domain; that stretch reads DIDECATGSHVCDENAVCDNTEGGFNCYCTEGFEGNGYRCL. Asn633 carries N-linked (GlcNAc...) asparagine glycosylation. The segment at 645–691 is disordered; it reads VEGQAEPTSEPSPNPSPYPDQGQDQEREREDDQYPQPNPYPYPEEQI. EGF-like domains follow at residues 788–829, 832–874, 912–953, 955–996, and 997–1037; these read DLIP…YNCD, SDDS…FNCQ, PAGR…TGCT, KPLS…YVCI, and EEQN…SLCQ. 15 disulfide bridges follow: Cys792–Cys804, Cys798–Cys815, Cys817–Cys828, Cys836–Cys849, Cys843–Cys860, Cys862–Cys873, Cys916–Cys927, Cys921–Cys938, Cys940–Cys952, Cys959–Cys971, Cys965–Cys982, Cys984–Cys995, Cys1001–Cys1014, Cys1008–Cys1023, and Cys1025–Cys1036. N-linked (GlcNAc...) asparagine glycosylation is present at Asn801. A glycan (N-linked (GlcNAc...) asparagine) is linked at Asn1032. LDL-receptor class B repeat units follow at residues 1084–1126, 1127–1170, 1171–1216, and 1257–1282; these read GRVY…DVIS, RRLY…DPYR, EKLF…LENS, and DQFY…QTPI.

In terms of tissue distribution, expressed in the basement membrane around the follicular epithelium of the adult ovary (at protein level).

The protein localises to the secreted. The protein resides in the extracellular space. It localises to the extracellular matrix. Its subcellular location is the basement membrane. Functionally, cell adhesion glycoprotein which is widely distributed in basement membranes. Involved in cell-extracellular matrix (ECM) interactions probably by connecting the laminin and collagen IV networks. Required for permeability and mechanical stability of basement membranes, and ECM dependent neural plasticity. Not involved in assembly of the embryonic basement membrane. This Drosophila melanogaster (Fruit fly) protein is Nidogen.